Reading from the N-terminus, the 72-residue chain is Conotoxin 3 (72 aa).

A signal peptide spans 1-22; sequence MKLTCVVIVAVLLLTACQLITA. A propeptide spanning residues 23 to 46 is cleaved from the precursor; sequence DDSRGTQEHRALRSDTKLSMLTLR. 3 cysteine pairs are disulfide-bonded: C47–C61, C54–C64, and C60–C71.

Belongs to the conotoxin O1 superfamily. In terms of tissue distribution, expressed by the venom duct.

It localises to the secreted. This chain is Conotoxin 3, found in Conus striatus (Striated cone).